The sequence spans 220 residues: Fructose-6-phosphate aldolase (220 aa).

Lysine 85 functions as the Schiff-base intermediate with substrate in the catalytic mechanism.

Belongs to the transaldolase family. Type 3A subfamily. As to quaternary structure, homodecamer.

It localises to the cytoplasm. It carries out the reaction beta-D-fructose 6-phosphate = dihydroxyacetone + D-glyceraldehyde 3-phosphate. Functionally, catalyzes the reversible formation of fructose 6-phosphate from dihydroxyacetone and D-glyceraldehyde 3-phosphate via an aldolization reaction. The protein is Fructose-6-phosphate aldolase of Salmonella typhi.